We begin with the raw amino-acid sequence, 134 residues long: MTLNLCVLTPNRMIWDSEVKEIILSTNSGQIGVLPNHAPIATAVDIGLLRIRLKDRWLTVALMGGFARISNNEITILGNGAEISTDIDPQEAQQTLEIAEANLSKAEGKRQAIEANLALRRARTRVEAIKVISS.

The protein belongs to the ATPase epsilon chain family. F-type ATPases have 2 components, CF(1) - the catalytic core - and CF(0) - the membrane proton channel. CF(1) has five subunits: alpha(3), beta(3), gamma(1), delta(1), epsilon(1). CF(0) has three main subunits: a, b and c.

It is found in the plastid. It localises to the chloroplast thylakoid membrane. Functionally, produces ATP from ADP in the presence of a proton gradient across the membrane. This is ATP synthase epsilon chain, chloroplastic from Phalaenopsis aphrodite subsp. formosana (Moth orchid).